Here is a 382-residue protein sequence, read N- to C-terminus: Galactokinase (382 aa).

34–37 (EHTD) contributes to the substrate binding site. 124–130 (GAGLSSS) is a binding site for ATP. Mg(2+)-binding residues include Ser130 and Glu162. Residue Asp174 is the Proton acceptor of the active site. Position 223 (Tyr223) interacts with substrate.

The protein belongs to the GHMP kinase family. GalK subfamily.

Its subcellular location is the cytoplasm. It catalyses the reaction alpha-D-galactose + ATP = alpha-D-galactose 1-phosphate + ADP + H(+). It participates in carbohydrate metabolism; galactose metabolism. Functionally, catalyzes the transfer of the gamma-phosphate of ATP to D-galactose to form alpha-D-galactose-1-phosphate (Gal-1-P). The chain is Galactokinase from Escherichia fergusonii (strain ATCC 35469 / DSM 13698 / CCUG 18766 / IAM 14443 / JCM 21226 / LMG 7866 / NBRC 102419 / NCTC 12128 / CDC 0568-73).